The primary structure comprises 387 residues: Protein RecA, chromosomal (387 aa).

80-87 is a binding site for ATP; that stretch reads GPESSGKT. The tract at residues 352-387 is disordered; sequence EVAETTEDTSTKAKATKAKKEEKVVETEEIELELED. The segment covering 378-387 has biased composition (acidic residues); it reads TEEIELELED.

This sequence belongs to the RecA family.

The protein resides in the cytoplasm. Functionally, can catalyze the hydrolysis of ATP in the presence of single-stranded DNA, the ATP-dependent uptake of single-stranded DNA by duplex DNA, and the ATP-dependent hybridization of homologous single-stranded DNAs. It interacts with LexA causing its activation and leading to its autocatalytic cleavage. The chain is Protein RecA, chromosomal from Lactococcus lactis subsp. lactis (strain IL1403) (Streptococcus lactis).